A 799-amino-acid chain; its full sequence is Serine/threonine-protein kinase AfsK (799 aa).

In terms of domain architecture, Protein kinase spans 16–271 (FEVLGRLGAG…QAQLAPHLFG (256 aa)). Residues 22–30 (LGAGGMGLV) and Lys-44 contribute to the ATP site. A Phosphoserine; by autocatalysis modification is found at Ser-71. The active-site Proton acceptor is the Asp-138. Thr-168 bears the Phosphothreonine; by autocatalysis mark. Disordered stretches follow at residues 295 to 343 (RRNG…PAPP) and 393 to 426 (LAASWSRPRPGVNGADPAVPAPAPAPPEASPAGW). Composition is skewed to pro residues over residues 325–343 (HAPPLPPPPAHDPVVPAPP) and 411–421 (VPAPAPAPPEA).

Belongs to the protein kinase superfamily. Ser/Thr protein kinase family. In terms of assembly, interacts (via the N-terminal kinase domain) with KbpA; the interaction prevents autophosphorylation of AfsK. Post-translationally, autophosphorylated mainly on threonine residues. Some phosphorylation on serine residues. Autophosphorylation on Thr-168 is the major site enhancing kinase activity towards AfsR, and is regulated though interaction with KbpA.

The catalysed reaction is L-seryl-[protein] + ATP = O-phospho-L-seryl-[protein] + ADP + H(+). The enzyme catalyses L-threonyl-[protein] + ATP = O-phospho-L-threonyl-[protein] + ADP + H(+). Its function is as follows. Involved in the regulation of secondary metabolism by phosphorylating, on both Ser and Thr, the AfsR global regulatory protein involved in the control of secondary metabolism. This Streptomyces coelicolor (strain ATCC BAA-471 / A3(2) / M145) protein is Serine/threonine-protein kinase AfsK (afsK).